Consider the following 1909-residue polypeptide: Receptor-type tyrosine-protein phosphatase F (1909 aa).

The signal sequence occupies residues 1 to 31; sequence MVPNTCTSVPLLPVGLPLLLLLSCIQFSSQA. Over 32-1266 the chain is Extracellular; that stretch reads DSLPNFVRSP…RSVDQPEMLW (1235 aa). Ig-like C2-type domains follow at residues 35 to 125, 137 to 225, and 233 to 315; these read PNFV…AKLT, PTID…ANLY, and PRFS…AQVS. Residues cysteine 56 and cysteine 109 are joined by a disulfide bond. Residue 68–77 coordinates heparin; the sequence is WMKKGKKVSS. Asparagine 119 carries N-linked (GlcNAc...) asparagine glycosylation. The cysteines at positions 158 and 208 are disulfide-linked. Residues asparagine 251 and asparagine 296 are each glycosylated (N-linked (GlcNAc...) asparagine). Residues cysteine 254 and cysteine 299 are joined by a disulfide bond. 8 Fibronectin type-III domains span residues 322 to 412, 417 to 511, 515 to 604, 609 to 706, 711 to 819, 820 to 914, 918 to 1013, and 1014 to 1098; these read PPTS…TGEQ, PPLH…TQQG, QPSS…TAQS, PPQD…TNED, PPRK…TTGA, VPGK…PEDV, FPLN…TSPA, and FATS…TAPD. A disordered region spans residues 399–418; sequence GPPSEPVETRTGEQAPSSPP. Residue asparagine 721 is glycosylated (N-linked (GlcNAc...) asparagine). Asparagine 963 and asparagine 966 each carry an N-linked (GlcNAc...) asparagine glycan. A helical transmembrane segment spans residues 1267-1287; that stretch reads VMGPVLAVVLIIIIVIAILLF. The Cytoplasmic segment spans residues 1288–1909; it reads KRKRASPLPK…YLGSFDHYAT (622 aa). Tyrosine-protein phosphatase domains follow at residues 1354 to 1609 and 1641 to 1900; these read FSQE…LLEA and MELE…ALEY. Residues aspartate 1518, 1550-1556, and glutamine 1594 contribute to the substrate site; that span reads CSAGVGR. The active-site Phosphocysteine intermediate is the cysteine 1550. Cysteine 1841 (phosphocysteine intermediate) is an active-site residue.

Belongs to the protein-tyrosine phosphatase family. Receptor class 2A subfamily.

It localises to the membrane. The catalysed reaction is O-phospho-L-tyrosyl-[protein] + H2O = L-tyrosyl-[protein] + phosphate. Possible cell adhesion receptor. It possesses an intrinsic protein tyrosine phosphatase activity (PTPase). Its function is as follows. The first PTPase domain has enzymatic activity, while the second one seems to affect the substrate specificity of the first one. The protein is Receptor-type tyrosine-protein phosphatase F (ptprf) of Danio rerio (Zebrafish).